A 122-amino-acid polypeptide reads, in one-letter code: Large ribosomal subunit protein uL18 (122 aa).

The segment covering 1-22 (MDKNKKLQSKRLRRRRHVRNKL) has biased composition (basic residues). Residues 1-25 (MDKNKKLQSKRLRRRRHVRNKLRGS) form a disordered region.

The protein belongs to the universal ribosomal protein uL18 family. Part of the 50S ribosomal subunit; part of the 5S rRNA/L5/L18/L25 subcomplex. Contacts the 5S and 23S rRNAs.

In terms of biological role, this is one of the proteins that bind and probably mediate the attachment of the 5S RNA into the large ribosomal subunit, where it forms part of the central protuberance. This is Large ribosomal subunit protein uL18 from Rhodopirellula baltica (strain DSM 10527 / NCIMB 13988 / SH1).